The sequence spans 209 residues: HTH-type transcriptional repressor BepR (209 aa).

Residues 9-69 form the HTH tetR-type domain; it reads AETREAILLA…SIIGRARFPQ (61 aa). A DNA-binding region (H-T-H motif) is located at residues 32–51; it reads TLTEIACYAGVTRGAIYFHF.

Represses expression of bepDE. The sequence is that of HTH-type transcriptional repressor BepR (bepR) from Brucella suis biovar 1 (strain 1330).